Here is a 431-residue protein sequence, read N- to C-terminus: Phosphoribosylamine--glycine ligase (431 aa).

An ATP-grasp domain is found at 108 to 315 (KDFLARHEIP…LVLLVEAAFA (208 aa)). Residue 134–195 (LQEKGAPIVI…EEFLDGEEAS (62 aa)) coordinates ATP. Mg(2+) contacts are provided by glutamate 285 and asparagine 287.

Belongs to the GARS family. Mg(2+) serves as cofactor. The cofactor is Mn(2+).

The enzyme catalyses 5-phospho-beta-D-ribosylamine + glycine + ATP = N(1)-(5-phospho-beta-D-ribosyl)glycinamide + ADP + phosphate + H(+). The protein operates within purine metabolism; IMP biosynthesis via de novo pathway; N(1)-(5-phospho-D-ribosyl)glycinamide from 5-phospho-alpha-D-ribose 1-diphosphate: step 2/2. The polypeptide is Phosphoribosylamine--glycine ligase (Pseudomonas putida (strain ATCC 47054 / DSM 6125 / CFBP 8728 / NCIMB 11950 / KT2440)).